Here is a 300-residue protein sequence, read N- to C-terminus: Protoheme IX farnesyltransferase (300 aa).

9 helical membrane passes run Val24–Val44, Trp46–Ile66, Pro94–Phe114, Leu118–Leu138, Ile146–Gly166, Ala172–Leu192, Leu217–Gly237, Ser239–Trp259, and Ile278–Leu298.

It belongs to the UbiA prenyltransferase family. Protoheme IX farnesyltransferase subfamily.

Its subcellular location is the cell inner membrane. It carries out the reaction heme b + (2E,6E)-farnesyl diphosphate + H2O = Fe(II)-heme o + diphosphate. Its pathway is porphyrin-containing compound metabolism; heme O biosynthesis; heme O from protoheme: step 1/1. Converts heme B (protoheme IX) to heme O by substitution of the vinyl group on carbon 2 of heme B porphyrin ring with a hydroxyethyl farnesyl side group. This chain is Protoheme IX farnesyltransferase, found in Burkholderia cenocepacia (strain HI2424).